A 708-amino-acid polypeptide reads, in one-letter code: Leucine-rich repeat neuronal protein 3 (708 aa).

A signal peptide spans 1 to 22 (MKDMPLRIHVLLGLAITTLVQA). Residues 23 to 69 (VDKKVDCPRLCTCEIRPWFTPRSIYMEASTVDCNDLGLLTFPARLPA) enclose the LRRNT domain. Residues 23–628 (VDKKVDCPRL…KEYEKNNTTT (606 aa)) are Extracellular-facing. 12 LRR repeats span residues 70-91 (NTQI…TDFP), 93-114 (NLTG…NVKK), 117-138 (QLLS…CLSE), 141-162 (NLQE…AFIG), 165-186 (NLLR…WFDA), 189-210 (NLEI…NFKP), 213-234 (NLRS…ALVG), 237-258 (NLES…ALQK), 261-282 (NLKF…DFSN), 285-304 (HLKE…DSLA), 310-332 (DLRK…AFFR), and 335-358 (KLES…ESLP). Residues N93 and N103 are each glycosylated (N-linked (GlcNAc...) asparagine). Residue N223 is glycosylated (N-linked (GlcNAc...) asparagine). One can recognise an LRRCT domain in the interval 368 to 421 (NPIRCDCVIRWMNMNKTNIRFMEPDSLFCVDPPEFQGQNVRQVHFRDMMEICLP). An N-linked (GlcNAc...) asparagine glycan is attached at N382. One can recognise an Ig-like C2-type domain in the interval 421-514 (PLIAPESFPS…DLKSVMIKVD (94 aa)). A disulfide bond links C444 and C496. Residues N522, N579, N608, N624, and N625 are each glycosylated (N-linked (GlcNAc...) asparagine). The Fibronectin type-III domain occupies 523–617 (GSLNIKIRDI…NVTTKGLHPD (95 aa)). A helical transmembrane segment spans residues 629-649 (LMACLGGLLGIIGVICLISCL). Topologically, residues 650–708 (SPEMNCDGGHSYVRNYLQKPTFALGELYPPLINLWEAGKEKSTSLKVKATVIGLPTNMS) are cytoplasmic.

Its subcellular location is the membrane. The protein is Leucine-rich repeat neuronal protein 3 (LRRN3) of Homo sapiens (Human).